The chain runs to 268 residues: Hydroxyethylthiazole kinase (268 aa).

Met-45 contacts substrate. ATP contacts are provided by Arg-121 and Thr-167. Substrate is bound at residue Gly-194.

The protein belongs to the Thz kinase family. The cofactor is Mg(2+).

It catalyses the reaction 5-(2-hydroxyethyl)-4-methylthiazole + ATP = 4-methyl-5-(2-phosphooxyethyl)-thiazole + ADP + H(+). The protein operates within cofactor biosynthesis; thiamine diphosphate biosynthesis; 4-methyl-5-(2-phosphoethyl)-thiazole from 5-(2-hydroxyethyl)-4-methylthiazole: step 1/1. In terms of biological role, catalyzes the phosphorylation of the hydroxyl group of 4-methyl-5-beta-hydroxyethylthiazole (THZ). The polypeptide is Hydroxyethylthiazole kinase (Bacillus thuringiensis subsp. konkukian (strain 97-27)).